Reading from the N-terminus, the 351-residue chain is Fe(3+) ions import ATP-binding protein FbpC (351 aa).

In terms of domain architecture, ABC transporter spans valine 7–methionine 237. Residue glycine 39–threonine 46 participates in ATP binding.

It belongs to the ABC transporter superfamily. Fe(3+) ion importer (TC 3.A.1.10) family. As to quaternary structure, the complex is composed of two ATP-binding proteins (FbpC), two transmembrane proteins (FbpB) and a solute-binding protein (FbpA).

Its subcellular location is the cell inner membrane. It carries out the reaction Fe(3+)(out) + ATP + H2O = Fe(3+)(in) + ADP + phosphate + H(+). Part of the ABC transporter complex FbpABC involved in Fe(3+) ions import. Responsible for energy coupling to the transport system. The protein is Fe(3+) ions import ATP-binding protein FbpC of Photorhabdus laumondii subsp. laumondii (strain DSM 15139 / CIP 105565 / TT01) (Photorhabdus luminescens subsp. laumondii).